Here is a 305-residue protein sequence, read N- to C-terminus: UDP-N-acetylenolpyruvoylglucosamine reductase (305 aa).

The FAD-binding PCMH-type domain occupies 33–198 (RVGGPAQVLF…TGGTFRGRRA (166 aa)). The active site involves arginine 178. The Proton donor role is filled by serine 227. Glutamate 297 is an active-site residue.

Belongs to the MurB family. FAD is required as a cofactor.

Its subcellular location is the cytoplasm. It carries out the reaction UDP-N-acetyl-alpha-D-muramate + NADP(+) = UDP-N-acetyl-3-O-(1-carboxyvinyl)-alpha-D-glucosamine + NADPH + H(+). The protein operates within cell wall biogenesis; peptidoglycan biosynthesis. Cell wall formation. This Nitrobacter hamburgensis (strain DSM 10229 / NCIMB 13809 / X14) protein is UDP-N-acetylenolpyruvoylglucosamine reductase.